A 336-amino-acid chain; its full sequence is Galactose/methyl galactoside import permease protein MglC (336 aa).

Over 1–16 the chain is Periplasmic; the sequence is MSALNKKSFLTYLKEG. Residues 17-37 form a helical membrane-spanning segment; that stretch reads GIYVVLLVLLAIIIFQDPTFL. The Cytoplasmic portion of the chain corresponds to 38 to 52; sequence SLLNLSNILTQSSVR. A helical transmembrane segment spans residues 53–73; that stretch reads IIIALGVAGLIVTQGTDLSAG. The Periplasmic portion of the chain corresponds to 74-106; sequence RQVGLAAVVAATLLQSMDNANKVFPEMATMPIA. The next 2 helical transmembrane spans lie at 107–127 and 128–148; these read LVIL…GLII and AYLN…VYGI. Residues 149-180 are Periplasmic-facing; it reads NSLYYDFVGASPISGFDSGFSTFAQGFVALGS. Residues 181–201 traverse the membrane as a helical segment; that stretch reads FRLSYITFYALIAVAFVWVLW. The Cytoplasmic portion of the chain corresponds to 202 to 226; that stretch reads NKTRFGKNIFAIGGNPEAAKVSGVN. The helical transmembrane segment at 227-247 threads the bilayer; that stretch reads VGLNLLMIYALSGVFYAFGGM. At 248–256 the chain is on the periplasmic side; the sequence is LEAGRIGSA. The chain crosses the membrane as a helical span at residues 257–277; the sequence is TNNLGFMYELDAIAACVVGGV. A topological domain (cytoplasmic) is located at residue Ser278. The chain crosses the membrane as a helical span at residues 279-299; that stretch reads FSGGVGTVIGVVTGVIIFTVI. At 300-305 the chain is on the periplasmic side; that stretch reads NYGLTY. A helical transmembrane segment spans residues 306–326; it reads IGVNPYWQYIIKGAIIIFAVA. Topologically, residues 327–336 are cytoplasmic; the sequence is LDSLKYARKK.

The protein belongs to the binding-protein-dependent transport system permease family. AraH/RbsC subfamily. The complex is composed of one ATP-binding protein (MglA), two transmembrane proteins (MglC) and a solute-binding protein (MglB).

It is found in the cell inner membrane. Functionally, part of the ABC transporter complex MglABC involved in galactose/methyl galactoside import. Probably responsible for the translocation of the substrate across the membrane. This Escherichia coli (strain K12) protein is Galactose/methyl galactoside import permease protein MglC (mglC).